A 97-amino-acid polypeptide reads, in one-letter code: ESAT-6-like protein EsxG (97 aa).

Ser-2 carries the post-translational modification N-acetylserine.

It belongs to the WXG100 family. CFP-10 subfamily. Forms a tight 1:1 complex with EsxH.

It is found in the secreted. EsxG, in complex with EsxH, disrupts ESCRT function and impairs host phagosome maturation, thereby promoting intracellular bacterial growth. The complex acts by interacting, via EsxH, with the host hepatocyte growth factor-regulated tyrosine kinase substrate (HGS/HRS), a component of the ESCRT machinery. EsxG stabilizes EsxH in the host cytosol. This Mycobacterium tuberculosis (strain ATCC 25618 / H37Rv) protein is ESAT-6-like protein EsxG.